The following is a 274-amino-acid chain: Penicillin-insensitive murein endopeptidase (274 aa).

The first 19 residues, 1–19, serve as a signal peptide directing secretion; sequence MNKTAIALLALLASSVSLA. 3 cysteine pairs are disulfide-bonded: Cys-44–Cys-265, Cys-187–Cys-235, and Cys-216–Cys-223. Positions 110, 113, 120, 147, 150, and 211 each coordinate Zn(2+). The interval 227-274 is disordered; it reads PLPPPGDGCGAELQSWFEPPKPGTTKPEKKTPPPLPPSCQALLDEHVI.

This sequence belongs to the peptidase M74 family. In terms of assembly, dimer. Zn(2+) is required as a cofactor.

The protein localises to the periplasm. Its function is as follows. Murein endopeptidase that cleaves the D-alanyl-meso-2,6-diamino-pimelyl amide bond that connects peptidoglycan strands. Likely plays a role in the removal of murein from the sacculus. This Escherichia coli O157:H7 protein is Penicillin-insensitive murein endopeptidase.